A 207-amino-acid polypeptide reads, in one-letter code: Cytochrome c biogenesis ATP-binding export protein CcmA (207 aa).

Residues 6-207 (LCAEGLECIR…RGDCRSLNLS (202 aa)) enclose the ABC transporter domain. Residue 38 to 45 (GANGAGKT) coordinates ATP.

It belongs to the ABC transporter superfamily. CcmA exporter (TC 3.A.1.107) family. In terms of assembly, the complex is composed of two ATP-binding proteins (CcmA) and two transmembrane proteins (CcmB).

It localises to the cell inner membrane. It catalyses the reaction heme b(in) + ATP + H2O = heme b(out) + ADP + phosphate + H(+). Part of the ABC transporter complex CcmAB involved in the biogenesis of c-type cytochromes; once thought to export heme, this seems not to be the case, but its exact role is uncertain. Responsible for energy coupling to the transport system. The protein is Cytochrome c biogenesis ATP-binding export protein CcmA of Methylococcus capsulatus (strain ATCC 33009 / NCIMB 11132 / Bath).